The primary structure comprises 355 residues: Histidinol-phosphate aminotransferase (355 aa).

Residue lysine 211 is modified to N6-(pyridoxal phosphate)lysine.

The protein belongs to the class-II pyridoxal-phosphate-dependent aminotransferase family. Histidinol-phosphate aminotransferase subfamily. In terms of assembly, homodimer. The cofactor is pyridoxal 5'-phosphate.

The enzyme catalyses L-histidinol phosphate + 2-oxoglutarate = 3-(imidazol-4-yl)-2-oxopropyl phosphate + L-glutamate. It functions in the pathway amino-acid biosynthesis; L-histidine biosynthesis; L-histidine from 5-phospho-alpha-D-ribose 1-diphosphate: step 7/9. The polypeptide is Histidinol-phosphate aminotransferase (Aeromonas salmonicida (strain A449)).